A 296-amino-acid polypeptide reads, in one-letter code: Elongation factor Ts (296 aa).

An involved in Mg(2+) ion dislocation from EF-Tu region spans residues 79 to 82 (TDFV).

Belongs to the EF-Ts family.

It localises to the cytoplasm. Functionally, associates with the EF-Tu.GDP complex and induces the exchange of GDP to GTP. It remains bound to the aminoacyl-tRNA.EF-Tu.GTP complex up to the GTP hydrolysis stage on the ribosome. The protein is Elongation factor Ts of Paracoccus denitrificans (strain Pd 1222).